A 239-amino-acid chain; its full sequence is Leucyl/phenylalanyl-tRNA--protein transferase (239 aa).

The protein belongs to the L/F-transferase family.

It localises to the cytoplasm. The catalysed reaction is N-terminal L-lysyl-[protein] + L-leucyl-tRNA(Leu) = N-terminal L-leucyl-L-lysyl-[protein] + tRNA(Leu) + H(+). The enzyme catalyses N-terminal L-arginyl-[protein] + L-leucyl-tRNA(Leu) = N-terminal L-leucyl-L-arginyl-[protein] + tRNA(Leu) + H(+). It carries out the reaction L-phenylalanyl-tRNA(Phe) + an N-terminal L-alpha-aminoacyl-[protein] = an N-terminal L-phenylalanyl-L-alpha-aminoacyl-[protein] + tRNA(Phe). In terms of biological role, functions in the N-end rule pathway of protein degradation where it conjugates Leu, Phe and, less efficiently, Met from aminoacyl-tRNAs to the N-termini of proteins containing an N-terminal arginine or lysine. The chain is Leucyl/phenylalanyl-tRNA--protein transferase from Aliivibrio fischeri (strain ATCC 700601 / ES114) (Vibrio fischeri).